We begin with the raw amino-acid sequence, 398 residues long: Acetate kinase (398 aa).

Mg(2+) is bound at residue Asn-10. Lys-17 contacts ATP. Arg-91 is a substrate binding site. The active-site Proton donor/acceptor is Asp-148. Residues 208 to 212, 283 to 285, and 331 to 335 each bind ATP; these read HLGNG, DCR, and GIGEN. Glu-385 contacts Mg(2+).

The protein belongs to the acetokinase family. In terms of assembly, homodimer. It depends on Mg(2+) as a cofactor. The cofactor is Mn(2+).

It is found in the cytoplasm. The enzyme catalyses acetate + ATP = acetyl phosphate + ADP. Its pathway is metabolic intermediate biosynthesis; acetyl-CoA biosynthesis; acetyl-CoA from acetate: step 1/2. Its function is as follows. Catalyzes the formation of acetyl phosphate from acetate and ATP. Can also catalyze the reverse reaction. In Shewanella loihica (strain ATCC BAA-1088 / PV-4), this protein is Acetate kinase.